We begin with the raw amino-acid sequence, 961 residues long: E4 ubiquitin-protein ligase UFD2 (961 aa).

In terms of domain architecture, U-box spans 880-954 (DVPDEFLDPL…LCFKKQKKEE (75 aa)).

It belongs to the ubiquitin conjugation factor E4 family. Interacts with CDC48. Interacts with the ubiquitin-like domain of RAD23 and DSK2. Interacts with PEX29.

It localises to the cytoplasm. It is found in the nucleus. It catalyses the reaction S-ubiquitinyl-[E2 ubiquitin-conjugating enzyme]-L-cysteine + [acceptor protein]-L-lysine = [E2 ubiquitin-conjugating enzyme]-L-cysteine + N(6)-ubiquitinyl-[acceptor protein]-L-lysine.. It participates in protein modification; protein ubiquitination. In terms of biological role, E4 ubiquitin chain-elongation enzyme specifically involved in polyubiquitin chain assembly. Binds to CDC48 and elongates mono- and diubiquitinated ERAD substrates presented by the UFD1-NPL4-CDC48/p97 (UNC) AAA ATPase complex to a chain length of 4 to 6 ubiquitin moieties. Delivers these polyubiquitinated substrates to RAD23 and DSK2, which target them to the proteasome. Has E3 ubiquitin-protein ligase activity, accepting ubiquitin from its cognate E2 ubiquitin-conjugating enzyme UBC4. Enhances ubiquitination at 'Lys-48', but not at 'Lys-29' of the Ub moiety. Promotes ubiquitin chain elongation at 'Lys-48' on the DOA10 substrate PEX29. Also involved in the proteolytic processing of the ER-bound transcription factor SPT23. The sequence is that of E4 ubiquitin-protein ligase UFD2 (UFD2) from Saccharomyces cerevisiae (strain ATCC 204508 / S288c) (Baker's yeast).